Reading from the N-terminus, the 273-residue chain is Light-independent protochlorophyllide reductase iron-sulfur ATP-binding protein (273 aa).

ATP-binding positions include G12 to T17 and K41. S16 contacts Mg(2+). Residues C97 and C131 each coordinate [4Fe-4S] cluster. Residue N182–R183 participates in ATP binding.

It belongs to the NifH/BchL/ChlL family. In terms of assembly, homodimer. Protochlorophyllide reductase is composed of three subunits; BchL, BchN and BchB. It depends on [4Fe-4S] cluster as a cofactor.

It carries out the reaction chlorophyllide a + oxidized 2[4Fe-4S]-[ferredoxin] + 2 ADP + 2 phosphate = protochlorophyllide a + reduced 2[4Fe-4S]-[ferredoxin] + 2 ATP + 2 H2O. The protein operates within porphyrin-containing compound metabolism; bacteriochlorophyll biosynthesis (light-independent). Component of the dark-operative protochlorophyllide reductase (DPOR) that uses Mg-ATP and reduced ferredoxin to reduce ring D of protochlorophyllide (Pchlide) to form chlorophyllide a (Chlide). This reaction is light-independent. The L component serves as a unique electron donor to the NB-component of the complex, and binds Mg-ATP. In Roseiflexus sp. (strain RS-1), this protein is Light-independent protochlorophyllide reductase iron-sulfur ATP-binding protein.